The chain runs to 510 residues: Cytochrome P450 monooxygenase ptmK (510 aa).

Residues 2–22 (IIVTFFWVGIVLSAIWTFYKV) form a helical membrane-spanning segment. Residues N313, N408, and N443 are each glycosylated (N-linked (GlcNAc...) asparagine). Position 456 (C456) interacts with heme.

It belongs to the cytochrome P450 family. The cofactor is heme.

It localises to the membrane. It participates in secondary metabolite biosynthesis. Its function is as follows. Cytochrome P450 monooxygenase; part of the gene cluster that mediates the biosynthesis of the indole diterpenes penitrems. The geranylgeranyl diphosphate (GGPP) synthase ptmG catalyzes the first step in penitrem biosynthesis via conversion of farnesyl pyrophosphate and isopentyl pyrophosphate into geranylgeranyl pyrophosphate (GGPP). Condensation of indole-3-glycerol phosphate with GGPP by the prenyl transferase ptmC then forms 3-geranylgeranylindole (3-GGI). Epoxidation by the FAD-dependent monooxygenase ptmM leads to a epoxidized-GGI that is substrate of the terpene cyclase ptmB for cyclization to yield paspaline. Paspaline is subsequently converted to 13-desoxypaxilline by the cytochrome P450 monooxygenase ptmP, the latter being then converted to paxilline by the cytochrome P450 monooxygenase ptmQ. Paxilline is converted to beta-paxitriol via C-10 ketoreduction by the short-chain dehydrogenase ptmH which can be monoprenylated at the C-20 by the indole diterpene prenyltransferase ptmD. A two-step elimination (acetylation and elimination) process performed by the O-acetyltransferase ptmV and ptmI leads to the production of the prenylated form of penijanthine. The FAD-linked oxidoreductase ptmO then converts the prenylated form of penijanthine into PC-M5 which is in turn transformed into PC-M4 by the aromatic dimethylallyltransferase ptmE. Five sequential oxidative transformations performed by the cytochrome P450 monooxygenases ptmK, ptmU, ptmL, ptmN and ptmJ yield the various penitrem compounds. PtmK, ptmU and ptmM are involved in the formation of the key bicyclic ring of penitrem C via the formation of the intermediates secopenitrem D and penitrem D. PtmL catalyzes the epoxidation of penitrem D and C to yield penitrem B and F, respectively. PtmJ catalyzes the last benzylic hydroxylation to convert penitrem B to prenitrem E and penitrem F to penitrem A. The sequence is that of Cytochrome P450 monooxygenase ptmK from Penicillium ochrochloron.